Here is a 160-residue protein sequence, read N- to C-terminus: SsrA-binding protein (160 aa).

It belongs to the SmpB family.

The protein localises to the cytoplasm. Required for rescue of stalled ribosomes mediated by trans-translation. Binds to transfer-messenger RNA (tmRNA), required for stable association of tmRNA with ribosomes. tmRNA and SmpB together mimic tRNA shape, replacing the anticodon stem-loop with SmpB. tmRNA is encoded by the ssrA gene; the 2 termini fold to resemble tRNA(Ala) and it encodes a 'tag peptide', a short internal open reading frame. During trans-translation Ala-aminoacylated tmRNA acts like a tRNA, entering the A-site of stalled ribosomes, displacing the stalled mRNA. The ribosome then switches to translate the ORF on the tmRNA; the nascent peptide is terminated with the 'tag peptide' encoded by the tmRNA and targeted for degradation. The ribosome is freed to recommence translation, which seems to be the essential function of trans-translation. In Rhodospirillum rubrum (strain ATCC 11170 / ATH 1.1.1 / DSM 467 / LMG 4362 / NCIMB 8255 / S1), this protein is SsrA-binding protein.